The primary structure comprises 255 residues: Small ribosomal subunit protein uS2 (255 aa).

Residues 231–255 (RLQTGAEEEFSTEGEEVVEETPAEA) are disordered. Positions 236–255 (AEEEFSTEGEEVVEETPAEA) are enriched in acidic residues.

Belongs to the universal ribosomal protein uS2 family.

This is Small ribosomal subunit protein uS2 from Citrifermentans bemidjiense (strain ATCC BAA-1014 / DSM 16622 / JCM 12645 / Bem) (Geobacter bemidjiensis).